A 70-amino-acid chain; its full sequence is Large ribosomal subunit protein eL38 (70 aa).

The protein belongs to the eukaryotic ribosomal protein eL38 family.

This chain is Large ribosomal subunit protein eL38 (RpL38), found in Aedes aegypti (Yellowfever mosquito).